A 380-amino-acid chain; its full sequence is Cytochrome b (380 aa).

Helical transmembrane passes span 33–53, 77–98, 113–133, and 178–198; these read FGSL…FLAM, WLIR…FIHV, WNIG…GYVL, and FFAF…VHLL. Heme b-binding residues include histidine 83 and histidine 97. Positions 182 and 196 each coordinate heme b. A ubiquinone is bound at residue histidine 201. A run of 4 helical transmembrane segments spans residues 226–246, 288–308, 320–340, and 347–367; these read IKDL…VLFF, LGGV…PLLN, LTQF…WIGG, and FTTI…VLMP.

It belongs to the cytochrome b family. The cytochrome bc1 complex contains 11 subunits: 3 respiratory subunits (MT-CYB, CYC1 and UQCRFS1), 2 core proteins (UQCRC1 and UQCRC2) and 6 low-molecular weight proteins (UQCRH/QCR6, UQCRB/QCR7, UQCRQ/QCR8, UQCR10/QCR9, UQCR11/QCR10 and a cleavage product of UQCRFS1). This cytochrome bc1 complex then forms a dimer. Heme b serves as cofactor.

It localises to the mitochondrion inner membrane. Component of the ubiquinol-cytochrome c reductase complex (complex III or cytochrome b-c1 complex) that is part of the mitochondrial respiratory chain. The b-c1 complex mediates electron transfer from ubiquinol to cytochrome c. Contributes to the generation of a proton gradient across the mitochondrial membrane that is then used for ATP synthesis. In Thomasomys notatus (Distinguished oldfield mouse), this protein is Cytochrome b (MT-CYB).